Here is a 371-residue protein sequence, read N- to C-terminus: Aminomethyltransferase (371 aa).

It belongs to the GcvT family. In terms of assembly, the glycine cleavage system is composed of four proteins: P, T, L and H.

The enzyme catalyses N(6)-[(R)-S(8)-aminomethyldihydrolipoyl]-L-lysyl-[protein] + (6S)-5,6,7,8-tetrahydrofolate = N(6)-[(R)-dihydrolipoyl]-L-lysyl-[protein] + (6R)-5,10-methylene-5,6,7,8-tetrahydrofolate + NH4(+). In terms of biological role, the glycine cleavage system catalyzes the degradation of glycine. The sequence is that of Aminomethyltransferase from Nitrosococcus oceani (strain ATCC 19707 / BCRC 17464 / JCM 30415 / NCIMB 11848 / C-107).